Consider the following 267-residue polypeptide: Small ribosomal subunit protein uS2 (267 aa).

The tract at residues 224-244 (GRQGEDEDVTEDSFKDNKDAK) is disordered. The segment covering 235–244 (DSFKDNKDAK) has biased composition (basic and acidic residues).

This sequence belongs to the universal ribosomal protein uS2 family.

The chain is Small ribosomal subunit protein uS2 from Lactiplantibacillus plantarum (strain ATCC BAA-793 / NCIMB 8826 / WCFS1) (Lactobacillus plantarum).